Reading from the N-terminus, the 245-residue chain is Ribonuclease 3 (245 aa).

An RNase III domain is found at 19–148 (FKLFQEKIGI…FIGALYLDQG (130 aa)). E61 serves as a coordination point for Mg(2+). The active site involves D65. Mg(2+) contacts are provided by D134 and E137. E137 is an active-site residue. The DRBM domain occupies 174–243 (DYKSQLQELI…AAEALKKLKE (70 aa)).

The protein belongs to the ribonuclease III family. Homodimer. Mg(2+) serves as cofactor.

It is found in the cytoplasm. The enzyme catalyses Endonucleolytic cleavage to 5'-phosphomonoester.. In terms of biological role, digests double-stranded RNA. Involved in the processing of primary rRNA transcript to yield the immediate precursors to the large and small rRNAs (23S and 16S). Processes some mRNAs, and tRNAs when they are encoded in the rRNA operon. Processes pre-crRNA and tracrRNA of type II CRISPR loci if present in the organism. The polypeptide is Ribonuclease 3 (Bacillus cereus (strain 03BB102)).